The primary structure comprises 424 residues: Tyrosine--tRNA ligase (424 aa).

Tyr-37 is an L-tyrosine binding site. A 'HIGH' region motif is present at residues 42 to 51; the sequence is PTADSLHLGH. L-tyrosine is bound by residues Tyr-174 and Gln-178. The short motif at 234 to 238 is the 'KMSKS' region element; the sequence is KFGKT. Residue Lys-237 coordinates ATP. In terms of domain architecture, S4 RNA-binding spans 357-414; sequence TGLIDALVASGLAKSKSEARTFIQSGSVAINGNKAEALDHAIGGDELLYGRFTILRRG.

Belongs to the class-I aminoacyl-tRNA synthetase family. TyrS type 1 subfamily. As to quaternary structure, homodimer.

The protein localises to the cytoplasm. It catalyses the reaction tRNA(Tyr) + L-tyrosine + ATP = L-tyrosyl-tRNA(Tyr) + AMP + diphosphate + H(+). Its function is as follows. Catalyzes the attachment of tyrosine to tRNA(Tyr) in a two-step reaction: tyrosine is first activated by ATP to form Tyr-AMP and then transferred to the acceptor end of tRNA(Tyr). The sequence is that of Tyrosine--tRNA ligase from Dechloromonas aromatica (strain RCB).